Here is an 87-residue protein sequence, read N- to C-terminus: Olfactory receptor-like protein HbT2 (87 aa).

Over 1–8 (KLWRMTGT) the chain is Cytoplasmic. The helical transmembrane segment at 9–29 (WLGGFCHSIIQIPVIIQLPFC) threads the bilayer. Topologically, residues 30-55 (GPNVIDHYFRDLQPLFKLACTDTFME) are extracellular. The chain crosses the membrane as a helical span at residues 56–76 (GVIVLAFSGLFSVFSFLILVS). Residues 77 to 87 (SYIVILVNLRN) are Cytoplasmic-facing.

This sequence belongs to the G-protein coupled receptor 1 family.

It localises to the cell membrane. Its function is as follows. Odorant receptor. The chain is Olfactory receptor-like protein HbT2 from Apis mellifera ligustica (Common honeybee).